The primary structure comprises 98 residues: Large ribosomal subunit protein uL23 (98 aa).

Belongs to the universal ribosomal protein uL23 family. As to quaternary structure, part of the 50S ribosomal subunit. Contacts protein L29, and trigger factor when it is bound to the ribosome.

Its function is as follows. One of the early assembly proteins it binds 23S rRNA. One of the proteins that surrounds the polypeptide exit tunnel on the outside of the ribosome. Forms the main docking site for trigger factor binding to the ribosome. This Marinomonas sp. (strain MWYL1) protein is Large ribosomal subunit protein uL23.